Here is a 179-residue protein sequence, read N- to C-terminus: Segregation and condensation protein B (179 aa).

Belongs to the ScpB family. As to quaternary structure, homodimer. Homodimerization may be required to stabilize the binding of ScpA to the Smc head domains. Component of a cohesin-like complex composed of ScpA, ScpB and the Smc homodimer, in which ScpA and ScpB bind to the head domain of Smc. The presence of the three proteins is required for the association of the complex with DNA.

The protein localises to the cytoplasm. Functionally, participates in chromosomal partition during cell division. May act via the formation of a condensin-like complex containing Smc and ScpA that pull DNA away from mid-cell into both cell halves. This Streptococcus equi subsp. zooepidemicus (strain H70) protein is Segregation and condensation protein B.